Here is a 313-residue protein sequence, read N- to C-terminus: 4-diphosphocytidyl-2-C-methyl-D-erythritol kinase (313 aa).

The active site involves Lys10. Residue 95–105 (PVTAGLGGGSS) participates in ATP binding. Asp136 is a catalytic residue. A disordered region spans residues 289–313 (HPRVSPWRSPRSASSRSTRRSSRPT). Residues 292–304 (VSPWRSPRSASSR) show a composition bias toward low complexity.

It belongs to the GHMP kinase family. IspE subfamily.

It catalyses the reaction 4-CDP-2-C-methyl-D-erythritol + ATP = 4-CDP-2-C-methyl-D-erythritol 2-phosphate + ADP + H(+). It participates in isoprenoid biosynthesis; isopentenyl diphosphate biosynthesis via DXP pathway; isopentenyl diphosphate from 1-deoxy-D-xylulose 5-phosphate: step 3/6. Functionally, catalyzes the phosphorylation of the position 2 hydroxy group of 4-diphosphocytidyl-2C-methyl-D-erythritol. The sequence is that of 4-diphosphocytidyl-2-C-methyl-D-erythritol kinase from Anaeromyxobacter dehalogenans (strain 2CP-1 / ATCC BAA-258).